The sequence spans 329 residues: uncharacterized protein (329 aa).

The interval 109-147 (KALGNDQTSSMTSSTTAVTVAKSGDGQQQTGEQKEEDWK) is disordered. Positions 116–131 (TSSMTSSTTAVTVAKS) are enriched in low complexity.

This sequence to the C-terminal of MG321/MPN_456.

This is an uncharacterized protein from Mycoplasma pneumoniae (strain ATCC 29342 / M129 / Subtype 1) (Mycoplasmoides pneumoniae).